The following is a 94-amino-acid chain: Small ribosomal subunit protein uS19 (94 aa).

The protein belongs to the universal ribosomal protein uS19 family.

Its function is as follows. Protein S19 forms a complex with S13 that binds strongly to the 16S ribosomal RNA. In Wolbachia sp. subsp. Brugia malayi (strain TRS), this protein is Small ribosomal subunit protein uS19.